A 221-amino-acid chain; its full sequence is uncharacterized protein (221 aa).

An N-terminal signal peptide occupies residues 1–18; sequence MKRFLLLIILFGISFSFV.

This is an uncharacterized protein from Aquifex aeolicus (strain VF5).